The primary structure comprises 1026 residues: Contactin-4 (1026 aa).

The signal sequence occupies residues 1–18 (MRLPWELLVLQSFILCLA). 6 Ig-like C2-type domains span residues 32–117 (PSPV…AKLQ), 122–207 (DNFK…KVLG), 225–311 (PKIE…GQLT), 316–400 (PNWI…AELS), 406–493 (PDFS…GNLV), and 497–586 (PTRV…DRLS). 6 disulfide bridges follow: Cys-50–Cys-100, Cys-144–Cys-194, Cys-247–Cys-295, Cys-337–Cys-384, Cys-429–Cys-477, and Cys-519–Cys-576. Asn-65, Asn-90, and Asn-191 each carry an N-linked (GlcNAc...) asparagine glycan. Residues Asn-370, Asn-375, and Asn-466 are each glycosylated (N-linked (GlcNAc...) asparagine). Fibronectin type-III domains lie at 599–697 (PPEA…TEEA), 702–799 (TPAN…SAEE), 804–899 (PPAS…TRKP), and 900–995 (PPSQ…ISNA). A disordered region spans residues 685 to 710 (PSRPSEKRRTEEALPEVTPANVSGGG). Basic and acidic residues predominate over residues 687-696 (RPSEKRRTEE). Asn-705, Asn-764, Asn-858, Asn-893, Asn-911, Asn-929, and Asn-954 each carry an N-linked (GlcNAc...) asparagine glycan. Residues 886–896 (GPSSATVNVTT) are compositionally biased toward polar residues. Positions 886-907 (GPSSATVNVTTRKPPPSQPPGN) are disordered. Residue Ser-1000 is the site of GPI-anchor amidated serine attachment. The propeptide at 1001–1026 (GASTSNACTLSAISTIMISLTARSSL) is removed in mature form.

Belongs to the immunoglobulin superfamily. Contactin family. Interacts with PTPRG. Mainly expressed in brain. Highly expressed in cerebellum and weakly expressed in corpus callosum, caudate nucleus, amygdala and spinal cord. Also expressed in testis, pancreas, thyroid, uterus, small intestine and kidney. Not expressed in skeletal muscle. Isoform 2 is weakly expressed in cerebral cortex.

It localises to the cell membrane. Its subcellular location is the secreted. Contactins mediate cell surface interactions during nervous system development. Has some neurite outgrowth-promoting activity. May be involved in synaptogenesis. In Homo sapiens (Human), this protein is Contactin-4 (CNTN4).